The sequence spans 117 residues: MPSKKDTTPKFHKLHVKTGDTVQVIAGKDKGKVGEVIKALPQLSKVIVKGVNIKTKHVKPQQEGESGRIVTQEAPIHSSNVMLYSTKQNVASRVCYTFTAEGKKVRKLKKTGEILDN.

The protein belongs to the universal ribosomal protein uL24 family. In terms of assembly, part of the 50S ribosomal subunit.

Its function is as follows. One of two assembly initiator proteins, it binds directly to the 5'-end of the 23S rRNA, where it nucleates assembly of the 50S subunit. One of the proteins that surrounds the polypeptide exit tunnel on the outside of the subunit. In Trichormus variabilis (strain ATCC 29413 / PCC 7937) (Anabaena variabilis), this protein is Large ribosomal subunit protein uL24.